Consider the following 302-residue polypeptide: Heat stress transcription factor B-1 (302 aa).

Residues 1 to 15 (MAAAEAAAAVGKQQQ) show a composition bias toward low complexity. Disordered regions lie at residues 1-33 (MAAA…PFLT) and 116-184 (GIRR…RKDN). Gly residues predominate over residues 16-28 (KGGGGRGGGGGGP). Residues 123 to 133 (TTPQSSKSCGS) show a composition bias toward polar residues. Pro residues predominate over residues 139-150 (FPPPLPPLPPEP). The segment covering 151-172 (SATTSSGNDRSSSSASSPPRAD) has biased composition (low complexity). Positions 170–202 (RADITSENEQLRKDNQTLTMELARARRHCEELL) form a coiled coil. Residues 180–209 (LRKDNQTLTMELARARRHCEELLGFLSRFL) are hydrophobic repeat HR-A/B. The Nuclear export signal motif lies at 211–218 (VRQLDLRL). The short motif at 263-267 (RKRAR) is the Nuclear localization signal element.

The protein belongs to the HSF family. Class B subfamily. As to quaternary structure, homotrimer. In terms of processing, exhibits temperature-dependent phosphorylation.

Its subcellular location is the cytoplasm. The protein localises to the nucleus. In terms of biological role, transcriptional regulator that specifically binds DNA of heat shock promoter elements (HSE). This Oryza sativa subsp. japonica (Rice) protein is Heat stress transcription factor B-1 (HSFB1).